The chain runs to 736 residues: DNA topoisomerase 1 (736 aa).

The 112-residue stretch at 2-113 (KHLIIVESPA…SYPRIVFHEI (112 aa)) folds into the Toprim domain. 2 residues coordinate Mg(2+): Glu-8 and Asp-82. In terms of domain architecture, Topo IA-type catalytic spans 129-552 (DMSKVNAQQA…DFYYPFMDKI (424 aa)). The interaction with DNA stretch occupies residues 163 to 168 (SAGRVQ). Tyr-297 (O-(5'-phospho-DNA)-tyrosine intermediate) is an active-site residue. 4 consecutive C4-type zinc fingers follow at residues 572 to 598 (CPKCGGELVKKNSRYGEFIACNNYPKC), 616 to 642 (CEKCGGEMVQKFSRNGAFLACNNYPEC), 663 to 689 (CPECGGDIALKRSKKGSFYGCNNYPKC), and 702 to 725 (CEKCHYLMSERIYRKKKAHECIKC).

It belongs to the type IA topoisomerase family. In terms of assembly, monomer. Mg(2+) is required as a cofactor.

It catalyses the reaction ATP-independent breakage of single-stranded DNA, followed by passage and rejoining.. In terms of biological role, releases the supercoiling and torsional tension of DNA, which is introduced during the DNA replication and transcription, by transiently cleaving and rejoining one strand of the DNA duplex. Introduces a single-strand break via transesterification at a target site in duplex DNA. The scissile phosphodiester is attacked by the catalytic tyrosine of the enzyme, resulting in the formation of a DNA-(5'-phosphotyrosyl)-enzyme intermediate and the expulsion of a 3'-OH DNA strand. The free DNA strand then undergoes passage around the unbroken strand, thus removing DNA supercoils. Finally, in the religation step, the DNA 3'-OH attacks the covalent intermediate to expel the active-site tyrosine and restore the DNA phosphodiester backbone. This chain is DNA topoisomerase 1, found in Helicobacter pylori (strain ATCC 700392 / 26695) (Campylobacter pylori).